Here is a 181-residue protein sequence, read N- to C-terminus: 6,7-dimethyl-8-ribityllumazine synthase (181 aa).

5-amino-6-(D-ribitylamino)uracil is bound by residues tyrosine 27, 58-60 (ALE), and 87-89 (CVI). (2S)-2-hydroxy-3-oxobutyl phosphate is bound at residue 92–93 (ET). Catalysis depends on histidine 95, which acts as the Proton donor. Asparagine 120 contributes to the 5-amino-6-(D-ribitylamino)uracil binding site. Arginine 134 is a (2S)-2-hydroxy-3-oxobutyl phosphate binding site.

Belongs to the DMRL synthase family.

The enzyme catalyses (2S)-2-hydroxy-3-oxobutyl phosphate + 5-amino-6-(D-ribitylamino)uracil = 6,7-dimethyl-8-(1-D-ribityl)lumazine + phosphate + 2 H2O + H(+). Its pathway is cofactor biosynthesis; riboflavin biosynthesis; riboflavin from 2-hydroxy-3-oxobutyl phosphate and 5-amino-6-(D-ribitylamino)uracil: step 1/2. Functionally, catalyzes the formation of 6,7-dimethyl-8-ribityllumazine by condensation of 5-amino-6-(D-ribitylamino)uracil with 3,4-dihydroxy-2-butanone 4-phosphate. This is the penultimate step in the biosynthesis of riboflavin. This chain is 6,7-dimethyl-8-ribityllumazine synthase, found in Methylobacterium sp. (strain 4-46).